The sequence spans 229 residues: Large ribosomal subunit protein uL1 (229 aa).

The protein belongs to the universal ribosomal protein uL1 family. In terms of assembly, part of the 50S ribosomal subunit.

In terms of biological role, binds directly to 23S rRNA. The L1 stalk is quite mobile in the ribosome, and is involved in E site tRNA release. Functionally, protein L1 is also a translational repressor protein, it controls the translation of the L11 operon by binding to its mRNA. This chain is Large ribosomal subunit protein uL1, found in Lactococcus lactis subsp. lactis (strain IL1403) (Streptococcus lactis).